Reading from the N-terminus, the 1155-residue chain is ATP-dependent helicase/deoxyribonuclease subunit B (1155 aa).

The region spanning M1–R278 is the UvrD-like helicase ATP-binding domain. G9–S16 is a binding site for ATP. The region spanning T270–V584 is the UvrD-like helicase C-terminal domain. C785, C1112, C1115, and C1121 together coordinate [4Fe-4S] cluster.

The protein belongs to the helicase family. AddB/RexB type 1 subfamily. In terms of assembly, heterodimer of AddA and AddB. It depends on Mg(2+) as a cofactor. [4Fe-4S] cluster is required as a cofactor.

The heterodimer acts as both an ATP-dependent DNA helicase and an ATP-dependent, dual-direction single-stranded exonuclease. Recognizes the chi site generating a DNA molecule suitable for the initiation of homologous recombination. The AddB subunit has 5' -&gt; 3' nuclease activity but not helicase activity. The sequence is that of ATP-dependent helicase/deoxyribonuclease subunit B from Staphylococcus carnosus (strain TM300).